The chain runs to 372 residues: Aminomethyltransferase (372 aa).

This sequence belongs to the GcvT family. In terms of assembly, the glycine cleavage system is composed of four proteins: P, T, L and H.

It catalyses the reaction N(6)-[(R)-S(8)-aminomethyldihydrolipoyl]-L-lysyl-[protein] + (6S)-5,6,7,8-tetrahydrofolate = N(6)-[(R)-dihydrolipoyl]-L-lysyl-[protein] + (6R)-5,10-methylene-5,6,7,8-tetrahydrofolate + NH4(+). In terms of biological role, the glycine cleavage system catalyzes the degradation of glycine. The sequence is that of Aminomethyltransferase from Streptomyces avermitilis (strain ATCC 31267 / DSM 46492 / JCM 5070 / NBRC 14893 / NCIMB 12804 / NRRL 8165 / MA-4680).